The sequence spans 513 residues: Noroxomaritidine synthase 2 (513 aa).

The helical transmembrane segment at 14–34 (HYPEILIAIACFLIFSLLLSA) threads the bilayer. C458 provides a ligand contact to heme.

It belongs to the cytochrome P450 family. Heme is required as a cofactor. Mostly expressed in stems, and, to a lower extent, in bulbs, roots, leaves and flowers.

The protein localises to the membrane. The enzyme catalyses 4'-O-methylnorbelladine + reduced [NADPH--hemoprotein reductase] + O2 = (10bR,4aS)-noroxomaritidine + oxidized [NADPH--hemoprotein reductase] + 2 H2O + H(+). It catalyses the reaction 4'-O-methylnorbelladine + reduced [NADPH--hemoprotein reductase] + O2 = (10bS,4aR)-noroxomaritidine + oxidized [NADPH--hemoprotein reductase] + 2 H2O + H(+). It participates in alkaloid biosynthesis. Its function is as follows. Cytochrome P450 that catalyzes an intramolecular para-para' C-C phenol coupling of 4'-O-methylnorbelladine in alkaloids biosynthesis, including haemanthamine- and crinamine-type alkaloids, promising anticancer agents. Catalyzes the formation of (10bR,4aS)-noroxomaritidine and (10bS,4aR)-noroxomaritidine from 4'-O-methylnorbelladine. The polypeptide is Noroxomaritidine synthase 2 (Narcissus pseudonarcissus (Daffodil)).